A 410-amino-acid chain; its full sequence is MFGPVSVEMIIERVDEVRGKVKAPPSKSYTHRAYFLSLLADSPSKVMNPLISEDTIASLDAISKFGAQVNGNKIIPPQELTPGKIDARESGTTARISLAVASLARGTSVITGKGRLVERPFKPLVDALRSLKVKISGEKLPIAVEGGNPVGEYVKVDCSLSSQFGTAMLILASKIGLTVEMLNPVSRPYIEVTLKVMESFGIEFERNGFKVKVHPGIRGSKFHVPGDYSSASFFLAAGALYGKVKVSNLVKDDPQADARIIDILEEFGADVKVGRKYVVVERNEMKPINVDCSNFPDLFPILAVLASYAEGKSVITGRQLRLKESDRVKAVAVNLRKAGIKVKELPNGLEIVGGKPRGFTVESFNDHRIVMAMAILGLGAEGKTIIKDPHVVSKSYPSFFLDLRRVLNEG.

Lysine 27, serine 28, and arginine 32 together coordinate 3-phosphoshikimate. Position 27 (lysine 27) interacts with phosphoenolpyruvate. Residues glycine 91 and arginine 119 each coordinate phosphoenolpyruvate. 3-phosphoshikimate is bound by residues serine 161, serine 162, glutamine 163, aspartate 297, glutamine 319, and lysine 323. Glutamine 163 contacts phosphoenolpyruvate. The Proton acceptor role is filled by aspartate 297. 3 residues coordinate phosphoenolpyruvate: arginine 327, arginine 368, and lysine 394.

This sequence belongs to the EPSP synthase family. In terms of assembly, monomer.

Its subcellular location is the cytoplasm. The enzyme catalyses 3-phosphoshikimate + phosphoenolpyruvate = 5-O-(1-carboxyvinyl)-3-phosphoshikimate + phosphate. It functions in the pathway metabolic intermediate biosynthesis; chorismate biosynthesis. Catalyzes the transfer of the enolpyruvyl moiety of phosphoenolpyruvate (PEP) to the 5-hydroxyl of shikimate-3-phosphate (S3P) to produce enolpyruvyl shikimate-3-phosphate and inorganic phosphate. The chain is 3-phosphoshikimate 1-carboxyvinyltransferase from Pyrococcus abyssi (strain GE5 / Orsay).